The primary structure comprises 131 residues: 14.7 kDa heat shock protein (131 aa).

Residues 1–11 (MSRNMEVNAGS) are compositionally biased toward polar residues. The tract at residues 1-20 (MSRNMEVNAGSSGEIPSPIR) is disordered. A sHSP domain is found at 22–131 (RFQKSGSQAV…INVKERILHY (110 aa)).

This sequence belongs to the small heat shock protein (HSP20) family. As to quaternary structure, may form oligomeric structures.

It localises to the cytoplasm. This chain is 14.7 kDa heat shock protein (HSP14.7), found in Arabidopsis thaliana (Mouse-ear cress).